The sequence spans 256 residues: UPF0259 membrane protein plu2479 (256 aa).

5 consecutive transmembrane segments (helical) span residues 23–43 (TLTL…LFIP), 89–109 (IFSS…LVAA), 132–152 (LFLL…LMLV), 192–212 (LLVP…FIID), and 221–241 (MAGI…LIYL).

Belongs to the UPF0259 family.

It localises to the cell inner membrane. The protein is UPF0259 membrane protein plu2479 of Photorhabdus laumondii subsp. laumondii (strain DSM 15139 / CIP 105565 / TT01) (Photorhabdus luminescens subsp. laumondii).